We begin with the raw amino-acid sequence, 336 residues long: Anthranilate phosphoribosyltransferase (336 aa).

5-phospho-alpha-D-ribose 1-diphosphate is bound by residues Gly-79, 82 to 83 (GD), Thr-87, 89 to 92 (NIST), 107 to 115 (KHGNRCVSS), and Ala-119. Gly-79 lines the anthranilate pocket. Ser-91 serves as a coordination point for Mg(2+). Asn-110 is an anthranilate binding site. Arg-165 contacts anthranilate. Mg(2+) contacts are provided by Asp-224 and Glu-225.

This sequence belongs to the anthranilate phosphoribosyltransferase family. As to quaternary structure, homodimer. Mg(2+) serves as cofactor.

The enzyme catalyses N-(5-phospho-beta-D-ribosyl)anthranilate + diphosphate = 5-phospho-alpha-D-ribose 1-diphosphate + anthranilate. The protein operates within amino-acid biosynthesis; L-tryptophan biosynthesis; L-tryptophan from chorismate: step 2/5. Catalyzes the transfer of the phosphoribosyl group of 5-phosphorylribose-1-pyrophosphate (PRPP) to anthranilate to yield N-(5'-phosphoribosyl)-anthranilate (PRA). The protein is Anthranilate phosphoribosyltransferase of Lachnoclostridium phytofermentans (strain ATCC 700394 / DSM 18823 / ISDg) (Clostridium phytofermentans).